The primary structure comprises 80 residues: MVKNTINLQDIFLNQVRKEHIAVTIYLTNGFQLKGLVKGFDNFTVVLDTDGKQQLVYKHAISTISPMKSVNLIFNEQGKE.

The Sm domain maps to 10–70 (DIFLNQVRKE…ISTISPMKSV (61 aa)).

It belongs to the Hfq family. Homohexamer.

In terms of biological role, RNA chaperone that binds small regulatory RNA (sRNAs) and mRNAs to facilitate mRNA translational regulation in response to envelope stress, environmental stress and changes in metabolite concentrations. Also binds with high specificity to tRNAs. This Ruminiclostridium cellulolyticum (strain ATCC 35319 / DSM 5812 / JCM 6584 / H10) (Clostridium cellulolyticum) protein is RNA-binding protein Hfq.